A 154-amino-acid chain; its full sequence is Putative nuclear shuttle protein (154 aa).

It belongs to the nanoviridae nuclear shuttle protein family.

It is found in the host nucleus. The protein resides in the host cytoplasm. Putative nuclear shuttle protein. This is Putative nuclear shuttle protein (DNA-N) from Musa (BBTV).